Here is a 1090-residue protein sequence, read N- to C-terminus: Neurofilament heavy polypeptide (1090 aa).

The head stretch occupies residues 2–98 (MSFGSADALL…AVAARSEKEQ (97 aa)). Phosphoserine occurs at positions 74 and 122. The IF rod domain occupies 95–411 (EKEQLQALND…KLLEGEECRI (317 aa)). The segment at 99 to 130 (LQALNDRFAGYIDKVRQLEAHNRSLEGEAAAL) is coil 1A. Residues 131–143 (RQQQAGRAAMGEL) form a linker 1 region. Positions 144–242 (YEREVREMRG…QEEVGELLGQ (99 aa)) are coil 1B. The linker 12 stretch occupies residues 243 to 264 (IQGCGAAQAQAQAEARDALKCD). A coil 2A region spans residues 265 to 286 (VTSALREIRAQLEGHAVQSTLQ). Residues 287 to 290 (SEEW) are linker 2. The tract at residues 291–411 (FRVRLDRLSE…KLLEGEECRI (121 aa)) is coil 2B. Ser345, Ser416, and Ser419 each carry phosphoserine. Residues 412–1090 (GFGPSPFSLT…TEDKATKGEK (679 aa)) form a tail region. A disordered region spans residues 456-1090 (EGQTEEIRVT…TEDKATKGEK (635 aa)). Over residues 468–495 (VTEEEDKEAQGQEGEEAEEGEEKEEEEG) the composition is skewed to acidic residues. The span at 496-506 (AAATSPPAEEA) shows a compositional bias: low complexity. Residues Ser508, Ser523, Ser529, Ser535, Ser541, Ser547, Ser553, Ser559, Ser565, Ser571, Ser577, Ser583, Ser589, Ser595, Ser601, Ser607, Ser613, Ser619, Ser625, Ser631, Ser637, Ser643, Ser649, Ser655, Ser661, Ser667, Ser673, Ser679, Ser685, Ser691, Ser697, Ser703, Ser709, Ser715, Ser721, Ser727, Ser733, Ser739, Ser745, Ser751, Ser757, Ser763, and Ser769 each carry the phosphoserine modification. Over residues 508 to 579 (SPEKETKSRV…KSPAEAKSPA (72 aa)) the composition is skewed to basic and acidic residues. A run of 42 repeats spans residues 522-527 (KSPGEA), 528-533 (KSPGEA), 534-539 (KSPAEA), 540-545 (KSPGEA), 546-551 (KSPGEA), 552-557 (KSPGEA), 558-563 (KSPAEP), 564-569 (KSPAEP), 570-575 (KSPAEA), 576-581 (KSPAEP), 582-587 (KSPATV), 588-593 (KSPGEA), 594-599 (KSPSEA), 600-605 (KSPAEA), 606-611 (KSPAEA), 612-617 (KSPAEA), 618-623 (KSPAEA), 624-629 (KSPAEA), 630-635 (KSPAEA), 636-641 (KSPATV), 642-647 (KSPGEA), 648-653 (KSPSEA), 654-659 (KSPAEA), 660-665 (KSPAEA), 666-671 (KSPAEA), 672-677 (KSPAEV), 678-683 (KSPGEA), 684-689 (KSPAEP), 690-695 (KSPAEA), 696-701 (KSPAEV), 702-707 (KSPAEA), 708-713 (KSPAEV), 714-719 (KSPGEA), 720-725 (KSPAAV), 726-731 (KSPAEA), 732-737 (KSPAAV), 738-743 (KSPGEA), 744-749 (KSPGEA), 750-755 (KSPAEA), 756-761 (KSPAEA), 762-767 (KSPIEV), and 768-773 (KSPEKA). A 52 X 6 AA approximate tandem repeats of K-S-P-[AGISV]-[EATK]-[APVQ] region spans residues 522-892 (KSPGEAKSPG…KEEVKSPVKE (371 aa)). The segment covering 595–633 (SPSEAKSPAEAKSPAEAKSPAEAKSPAEAKSPAEAKSPA) has biased composition (basic and acidic residues). Positions 649–717 (SPSEAKSPAE…KSPAEVKSPG (69 aa)) are enriched in basic and acidic residues. The segment covering 745–781 (SPGEAKSPAEAKSPAEAKSPIEVKSPEKAKTPVKEGA) has biased composition (basic and acidic residues). One copy of the 43; approximate repeat lies at 774–779 (KTPVKE). 6 consecutive repeat copies span residues 782–787 (KSPAEA), 788–793 (KSPEKA), 794–799 (KSPVKE), 808–813 (KSPEKA), 814–819 (KSPVKE), and 833–838 (KSPEAQ). A phosphoserine mark is found at Ser783, Ser789, Ser795, Ser809, Ser815, and Ser834. The span at 788 to 834 (KSPEKAKSPVKEDIKPPAEAKSPEKAKSPVKEGAKPPEKAKPLDVKS) shows a compositional bias: basic and acidic residues. Residue Thr839 is modified to Phosphothreonine. Composition is skewed to basic and acidic residues over residues 843-964 (EEAK…KAVA) and 974-1090 (GVKE…KGEK). Repeat copies occupy residues 858-863 (KSPAKE), 866-871 (KSPEKE), and 887-892 (KSPVKE). Phosphoserine is present on residues Ser859, Ser867, Ser888, and Ser947.

It belongs to the intermediate filament family. Forms heterodimers with NEFL; which can further hetero-oligomerize (in vitro). Forms heterodimers with INA (in vitro). Post-translationally, there are a number of repeats of the tripeptide K-S-P, NFH is phosphorylated on a number of the serines in this motif. It is thought that phosphorylation of NFH results in the formation of interfilament cross bridges that are important in the maintenance of axonal caliber. In terms of processing, phosphorylation seems to play a major role in the functioning of the larger neurofilament polypeptides (NF-M and NF-H), the levels of phosphorylation being altered developmentally and coincidentally with a change in the neurofilament function. Phosphorylated in the head and rod regions by the PKC kinase PKN1, leading to the inhibition of polymerization. In terms of tissue distribution, expressed in the sciatic nerve (at protein level).

Its subcellular location is the cytoplasm. It is found in the cytoskeleton. The protein resides in the cell projection. The protein localises to the axon. Functionally, neurofilaments usually contain three intermediate filament proteins: NEFL, NEFM, and NEFH which are involved in the maintenance of neuronal caliber. NEFH has an important function in mature axons that is not subserved by the two smaller NF proteins. May additionally cooperate with the neuronal intermediate filament proteins PRPH and INA to form neuronal filamentous networks. This is Neurofilament heavy polypeptide (Nefh) from Mus musculus (Mouse).